The sequence spans 241 residues: Methylosome subunit pICln (241 aa).

The tract at residues 88-112 is disordered; that stretch reads EDKEAHMADQEEEESEDDDDDEEPI. Residues 97–112 show a composition bias toward acidic residues; the sequence is QEEEESEDDDDDEEPI.

Belongs to the pICln (TC 1.A.47) family. In terms of assembly, component of the methylosome, a 20S complex containing at least clns1a/picln, prmt5/skb1 and wdr77/mep50; may mediate snrpd1 and snrpd3 methylation. Forms a 6S pICln-Sm complex composed of clns1a/picln, snrpd1, snrpd2, snrpe, snrpf and snrpg; ring-like structure where clns1a/pICln mimics additional Sm proteins and which is unable to assemble into the core snRNP.

Its subcellular location is the cytoplasm. The protein localises to the cytosol. The protein resides in the nucleus. It is found in the cytoskeleton. Functionally, involved in both the assembly of spliceosomal snRNPs and the methylation of Sm proteins. Chaperone that regulates the assembly of spliceosomal U1, U2, U4 and U5 small nuclear ribonucleoproteins (snRNPs), the building blocks of the spliceosome, and thereby plays an important role in the splicing of cellular pre-mRNAs. Most spliceosomal snRNPs contain a common set of Sm proteins SNRPB, SNRPD1, SNRPD2, SNRPD3, SNRPE, SNRPF and SNRPG that assemble in a heptameric protein ring on the Sm site of the small nuclear RNA to form the core snRNP (Sm core). In the cytosol, the Sm proteins SNRPD1, SNRPD2, SNRPE, SNRPF and SNRPG are trapped in an inactive 6S pICln-Sm complex by the chaperone CLNS1A that controls the assembly of the core snRNP. Dissociation by the SMN complex of CLNS1A from the trapped Sm proteins and their transfer to an SMN-Sm complex triggers the assembly of core snRNPs and their transport to the nucleus. The chain is Methylosome subunit pICln (clns1a) from Xenopus laevis (African clawed frog).